Reading from the N-terminus, the 189-residue chain is GTPase NRas (189 aa).

GTP-binding positions include 10–18 (GAGGVGKSA) and 29–30 (VD). Residues 32 to 40 (YDPTIEDSY) carry the Effector region motif. 57–61 (DTAGQ) is a GTP binding site. Ser-89 is modified (phosphoserine). GTP is bound at residue 116 to 119 (NKCD). Residues 166–185 (YRMKKLNSSEDGTQGCMGLP) are hypervariable region. Lys-170 is covalently cross-linked (Glycyl lysine isopeptide (Lys-Gly) (interchain with G-Cter in ubiquitin)). Residue Cys-181 is the site of S-palmitoyl cysteine attachment. Cys-186 carries S-farnesyl cysteine lipidation. Residues 187 to 189 (VVM) constitute a propeptide, removed in mature form.

Belongs to the small GTPase superfamily. Ras family. As to quaternary structure, interacts (active GTP-bound form preferentially) with RGS14. Interacts (active GTP-bound form) with RASSF7. Interacts (active GTP-bound form) with both SHOC2 and PP1c (all isoforms) to form a tertiary complex; SHOC2 and PP1c preferably bind M-Ras/MRAS, but they also bind K-Ras/KRAS, N-Ras/NRAS and H-Ras/HRAS. In terms of processing, palmitoylated by the ZDHHC9-GOLGA7 complex. Depalmitoylated by ABHD17A, ABHD17B and ABHD17C. A continuous cycle of de- and re-palmitoylation regulates rapid exchange between plasma membrane and Golgi. Post-translationally, acetylation at Lys-104 prevents interaction with guanine nucleotide exchange factors (GEFs). Ubiquitinated by the BCR(LZTR1) E3 ubiquitin ligase complex at Lys-170 in a non-degradative manner, leading to inhibit Ras signaling by decreasing Ras association with membranes. In terms of processing, phosphorylation at Ser-89 enhances NRAS association with its downstream effectors.

The protein resides in the cell membrane. The protein localises to the golgi apparatus membrane. It catalyses the reaction GTP + H2O = GDP + phosphate + H(+). Alternates between an inactive form bound to GDP and an active form bound to GTP. Activated by a guanine nucleotide-exchange factor (GEF) and inactivated by a GTPase-activating protein (GAP). In terms of biological role, ras proteins bind GDP/GTP and possess intrinsic GTPase activity. This is GTPase NRas (Nras) from Rattus norvegicus (Rat).